Reading from the N-terminus, the 121-residue chain is Transposase InsC for insertion element IS2A (121 aa).

It belongs to the transposase 8 family.

In terms of biological role, involved in the transposition of the insertion sequence IS2. The protein is Transposase InsC for insertion element IS2A (insC1) of Escherichia coli (strain K12).